Here is a 453-residue protein sequence, read N- to C-terminus: Divalent metal cation transporter MntH (453 aa).

Transmembrane regions (helical) follow at residues 39–59, 66–86, 114–134, 146–166, 175–195, 217–237, 270–290, 310–330, 362–382, 388–408, and 427–447; these read LAFL…GNWI, AQYG…AMLL, AIMF…AEVI, IPLI…LFIM, AIVG…VYIS, GILY…NLYL, LSIA…LFFG, PALG…ALLA, LITR…FKGN, QLLV…LIPL, and INII…YLII.

This sequence belongs to the NRAMP family.

The protein localises to the cell membrane. Functionally, h(+)-stimulated, divalent metal cation uptake system. The protein is Divalent metal cation transporter MntH of Staphylococcus epidermidis (strain ATCC 12228 / FDA PCI 1200).